The primary structure comprises 540 residues: Berberine bridge enzyme-like 16 (540 aa).

The signal sequence occupies residues 1 to 24 (MKFWSRPLTFLIIIIYLIIQQVNS). A disulfide bridge links C38 with C101. N59 carries N-linked (GlcNAc...) asparagine glycosylation. The 176-residue stretch at 79-254 (STRKPEVIVA…LAWKIKLVRV (176 aa)) folds into the FAD-binding PCMH-type domain. Residues 116–178 (HDYEGFSYTS…KVHAFPAGVC (63 aa)) constitute a cross-link (6-(S-cysteinyl)-8alpha-(pros-histidyl)-FAD (His-Cys)). 2 N-linked (GlcNAc...) asparagine glycosylation sites follow: N325 and N496.

This sequence belongs to the oxygen-dependent FAD-linked oxidoreductase family. Requires FAD as cofactor. Post-translationally, the FAD cofactor is bound via a bicovalent 6-S-cysteinyl, 8alpha-N1-histidyl FAD linkage.

It localises to the secreted. It is found in the cell wall. This Arabidopsis thaliana (Mouse-ear cress) protein is Berberine bridge enzyme-like 16.